The sequence spans 146 residues: Chorion class A protein Ld3/Ld29 (146 aa).

An N-terminal signal peptide occupies residues M1–S21.

This sequence belongs to the chorion protein family.

Functionally, this protein is one of many from the eggshell of the gypsy moth. This is Chorion class A protein Ld3/Ld29 from Lymantria dispar (Gypsy moth).